Reading from the N-terminus, the 60-residue chain is Large ribosomal subunit protein bL32 (60 aa).

Over residues 1 to 16 (MAVPKRKTTPSKRGMR) the composition is skewed to basic residues. The interval 1 to 34 (MAVPKRKTTPSKRGMRRAHDALSSPVYIEDKDSG) is disordered.

It belongs to the bacterial ribosomal protein bL32 family.

The sequence is that of Large ribosomal subunit protein bL32 from Maricaulis maris (strain MCS10) (Caulobacter maris).